The chain runs to 382 residues: MMSSSWCLPLALLFSTLAVSHSAEPGSTHAKRRLAQPLPGSGNALQYPDQGFQSHGHGHGRERGGGHGGQGSRGAKASSGAGLLSRRPLHPAARPEDDGTGLEGLNPVRLEMGPVGREQEKGHGGFRNPSHARDNHPLGPRKGRGQGHGHHFDQRRHGGRRDKGRLTKGFLPEPELGSVLKNRDLSEEGSVSSAAAATSPSHRLTPPTEPPSPIYAVFGSGSYAVSTVMSEHLPTLPPASTKPQKSGRGKMQGEVMPTLDMTLFDWTDYEDMKPVDAWPSSRKKDKRRSKNLSSGNVTVDTDAIEPCDHHLDCLPGSCCDLRQHECKPHNRGLNNKCYDDCMCEEGFRCYAKFHRKRRVTRRRGRCVVPESANSDQGAFITV.

Positions 1–22 (MMSSSWCLPLALLFSTLAVSHS) are cleaved as a signal peptide. Disordered regions lie at residues 28 to 213 (THAK…PPSP), 233 to 252 (LPTL…GKMQ), and 275 to 297 (VDAW…SGNV). A compositionally biased stretch (low complexity) spans 73-82 (RGAKASSGAG). Over residues 139-149 (GPRKGRGQGHG) the composition is skewed to basic residues. A compositionally biased stretch (low complexity) spans 190–201 (SVSSAAAATSPS). Positions 281–290 (SRKKDKRRSK) are enriched in basic residues. N-linked (GlcNAc...) asparagine glycans are attached at residues Asn-291 and Asn-296.

Belongs to the draxin family.

Its subcellular location is the secreted. Functionally, chemorepulsive axon guidance protein required for the development of spinal cord and forebrain commissures. Acts as a chemorepulsive guidance protein for commissural axons during development. Able to inhibit or repel neurite outgrowth from dorsal spinal cord. This is Draxin-A (draxin-A) from Salmo salar (Atlantic salmon).